We begin with the raw amino-acid sequence, 266 residues long: GTP cyclohydrolase FolE2 (266 aa).

The protein belongs to the GTP cyclohydrolase IV family.

It carries out the reaction GTP + H2O = 7,8-dihydroneopterin 3'-triphosphate + formate + H(+). Its pathway is cofactor biosynthesis; 7,8-dihydroneopterin triphosphate biosynthesis; 7,8-dihydroneopterin triphosphate from GTP: step 1/1. Converts GTP to 7,8-dihydroneopterin triphosphate. This is GTP cyclohydrolase FolE2 from Burkholderia mallei (strain ATCC 23344).